The primary structure comprises 580 residues: Mucin-1 (580 aa).

The N-terminal stretch at 1 to 22 (MTPDIQAPFLSLLLLFPVLTVA) is a signal peptide. Residues 23–489 (NVPTLTTSDS…GSGVPGWGIA (467 aa)) are Extracellular-facing. Residues 28-37 (TTSDSINPRR) show a composition bias toward polar residues. Residues 28–359 (TTSDSINPRR…SIALSTSSNP (332 aa)) are disordered. Residues 38-88 (TTPVSTTQSSPTSSPTKETSWSTTTTLLTASSPAPSPAASPGHDGASTPTS) are compositionally biased toward low complexity. Repeat copies occupy residues 70–89 (PAPSPAASPGHDGASTPTSS), 90–109 (PAPSPAASPGHDGASTPTSS), 110–129 (PAPSPAASPGHDGASTPTSS), 130–149 (PAPSPAASPGHDGASTPTSS), 150–169 (PAPSPAASPGHNGTSSPTGS), 170–189 (PAPSPAASPGHDGASTPTSS), 190–209 (PAPSPAASPGHNGTSSPTGS), 210–229 (PAPSPAASPGHDGASTPTSS), 230–249 (PAPSPAASPGHNGTSSPTGS), 250–269 (PAPSPTASPGHDSAPSLTSS), and 270–289 (PAPSPTASPGQHGASSPTSS). The interval 70-289 (PAPSPAASPG…QHGASSPTSS (220 aa)) is 11 X 20 AA approximate tandem repeats of P-A-P-S-P-A-A-S-P-G-H-D-G-A-S-T-P-T-S-S. Residues Ser-73, Ser-77, and Ser-84 are each glycosylated (O-linked (GalNAc...) serine). O-linked (GalNAc...) threonine glycans are attached at residues Thr-85 and Thr-87. O-linked (GalNAc...) serine glycans are attached at residues Ser-88 and Ser-89. Composition is skewed to low complexity over residues 96-108 (ASPGHDGASTPTS), 116-128 (ASPGHDGASTPTS), 136-148 (ASPGHDGASTPTS), 156-168 (ASPGHNGTSSPTG), 176-188 (ASPGHDGASTPTS), 196-208 (ASPGHNGTSSPTG), 216-228 (ASPGHDGASTPTS), 236-248 (ASPGHNGTSSPTG), and 256-306 (ASPG…MVTS). N-linked (GlcNAc...) asparagine glycosylation is present at Asn-161. Asn-201 carries N-linked (GlcNAc...) asparagine glycosylation. Residue Asn-241 is glycosylated (N-linked (GlcNAc...) asparagine). Residues 308-344 (HKGTSSRATMTPVSKGTPSSVPSSETAPTAASHITRT) show a composition bias toward polar residues. The span at 345–357 (AASSPSIALSTSS) shows a compositional bias: low complexity. The region spanning 368–475 (RVSLYFLSFR…VSVYSAPFPS (108 aa)) is the SEA domain. N-linked (GlcNAc...) asparagine glycans are attached at residues Asn-384 and Asn-460. Residues 490 to 510 (LLVLVCVLVALAIIYLIALVV) form a helical membrane-spanning segment. S-palmitoyl cysteine attachment occurs at residues Cys-511 and Cys-513. The Cytoplasmic portion of the chain corresponds to 511–580 (CQCGRKKCEQ…TNLAATSANL (70 aa)). Residues 519 to 555 (EQLDVFPTLDAYHPMSEYSTYHTHGRYVPPGSTKRSP) are interaction with P53. At Tyr-530 the chain carries Phosphotyrosine; by PDGFR. Residues 530–533 (YHPM) carry the Interaction with GRB2 motif. At Tyr-539 the chain carries Phosphotyrosine. The segment at 544–563 (RYVPPGSTKRSPYEEVSAGN) is disordered. At Tyr-545 the chain carries Phosphotyrosine; by PDGFR. The required for interaction with GSK3B stretch occupies residues 550 to 557 (STKRSPYE). A Phosphothreonine; by PKC/PRKCD modification is found at Thr-551. Ser-554 bears the Phosphoserine; by GSK3-beta mark. The residue at position 556 (Tyr-556) is a Phosphotyrosine; by CSK, EGFR and SRC. The Interaction with SRC and ESR1 motif lies at 556–559 (YEEV). Residues 560-568 (SAGNGGSNL) form a required for interaction with beta- and gamma-catenins region. Tyr-570 bears the Phosphotyrosine mark. Positions 570–572 (YTN) match the Required for interaction with AP1S2 motif.

In terms of assembly, the alpha subunit forms a tight, non-covalent heterodimeric complex with the proteolytically-released beta subunit. Binds directly the SH2 domain of GRB2, and forms a MUC1/GRB2/SOS1 complex involved in RAS signaling. The cytoplasmic tail (MUC1CT) interacts with several proteins such as, SRC, CTNNB1 and ERBs. Interaction with the SH2 domain of CSK decreases interaction with GSK3B. Interacts with CTNNB1/beta-catenin and JUP/gamma-catenin and promotes cell adhesion. Interaction with JUP/gamma-catenin is induced by heregulin. Binds PRKCD, ERBB2, ERBB3 and ERBB4. Heregulin (HRG) stimulates the interaction with ERBB2 and, to a much lesser extent, the interaction with ERBB3 and ERBB4. Interacts with P53 in response to DNA damage. Interacts with KLF4. Interacts with estrogen receptor alpha/ESR1, through its DNA-binding domain, and stimulates its transcription activity. Binds ADAM17. In terms of processing, highly glycosylated (N- and O-linked carbohydrates and sialic acid). O-linked glycosylation consists mainly of GalNAc, galactose, and sialic acid. The ratio from pools of milk from different dairy breeds is GalNAc: GlcNAc:galactose:mannose:sialic acid is 14:1:10:1:15. Proteolytic cleavage in the SEA domain occurs in the endoplasmic reticulum by an autoproteolytic mechanism and requires the full-length SEA domain as well as requiring a Ser, Thr or Cys residue at the P + 1 site. Ectodomain shedding is mediated by ADAM17 in uterine epithelial cells. Post-translationally, dual palmitoylation on cysteine residues in the CQC motif is required for recycling from endosomes back to the plasma membrane. In terms of processing, phosphorylated on tyrosines and serine residues in the C-terminal. Phosphorylation on tyrosines in the C-terminal increases the nuclear location of MUC1 and beta-catenin. Phosphorylation by PKC delta induces binding of MUC1 to beta-catenin/CTNNB1 and thus decreases the formation of the beta-catenin/E-cadherin complex. Src-mediated phosphorylation inhibits interaction with GSK3B. Csk- or Src- or EGFR-mediated phosphorylation on Tyr-556 increases binding to beta-catenin/CTNNB1. GSK3B-mediated phosphorylation on Ser-554 decreases this interaction but restores the formation of the beta-cadherin/E-cadherin complex. On T-cell receptor activation, phosphorylated by LCK. PDGFR-mediated phosphorylation increases nuclear colocalization of MUC1CT and CTNNB1. As to expression, expressed on the apical surface of epithelia cells, and on the milk fat globule membrane (MGGM).

It is found in the apical cell membrane. Its subcellular location is the cell membrane. The protein resides in the cytoplasm. The protein localises to the nucleus. Its function is as follows. The alpha subunit has cell adhesive properties. May provide a protective layer on epithelial cells against bacterial and enzyme attack. Functionally, the beta subunit contains a C-terminal domain which is involved in cell signaling, through phosphorylations and protein-protein interactions. Modulates signaling in ERK, Src and NF-kappa-B pathways. In activated T-cells, influences directly or indirectly the Ras/MAPK pathway. Promotes tumor progression. Regulates P53-mediated transcription and determines cell fate in the genotoxic stress response. Binds, together with KLF4, the PE21 promoter element of P53 and represses P53 activity. The chain is Mucin-1 (MUC1) from Bos taurus (Bovine).